The chain runs to 447 residues: MAQTGVLLTKEPAPQSIDVCELPRKEYEVACNTGAYTSSGLATAGFRTAKYLRDEWFQNSYARYHQAFADRDYSERQRHESGQLVAETGALAQRTQLDSTRKVGERLEDMHCWKSELQREIDELSSETDLMMAQKLRLQRALDATSVPYSIATDNLQCRERRQHPDLVRDYVEVELLKETELIRNIQELLKRTIGQAVDQIRLNREHKESCEMNWSDKVEVYNIDDTCSRYTNESTQVQFYPHSSKFEESASTPETWAKFNHDNLLRAERERLASVNLRKLIDCILRDTAEDLRLQCDAVNSAFSSRCQELDDSLQKLQYHLRKTLTEITDQEHQIAALKQAIKDKEAPLRVAQTRLYQRSHRPNVELCRDNAQFRLLSEVEELNMSLRALKEKLQDAEQALRNLEDSRMSLEKDIAVKTNSLFIDRQKCMTHRNRYPSVLQLAGYQ.

Coiled coils occupy residues 322–348 (LRKT…DKEA) and 375–423 (FRLL…TNSL).

It belongs to the tektin family. Microtubule inner protein component of sperm flagellar doublet microtubules. In terms of processing, ubiquitinated, leading to its degradation. Deubiquitinated by USP16, promoting its stability. Detected in testis, where it is weakly expressed in round spermatids, and strongly expressed in the flagellum of step 16 elongated spermatids (at protein level). Expressed in spermatozoa. In the sperm flagellum, localizes to the principal piece and midpiece (at protein level). Specifically expressed in testis; not detected in other tissues tested.

The protein resides in the cytoplasm. It is found in the cytoskeleton. It localises to the cilium axoneme. Its subcellular location is the flagellum axoneme. Functionally, microtubule inner protein (MIP) part of the dynein-decorated doublet microtubules (DMTs) in cilia and flagellar axoneme. Forms filamentous polymers in the walls of ciliary and flagellar microtubules. Contributes to normal sperm motility. The polypeptide is Tektin-4 (Tekt4) (Mus musculus (Mouse)).